Reading from the N-terminus, the 761-residue chain is Semaphorin-3D (761 aa).

The first 24 residues, 1–24 (MRASQVPNACSLLSLAMLFFPVTG), serve as a signal peptide directing secretion. One can recognise a Sema domain in the interval 32-519 (RLKLSYKDLL…SRDGLVQLSL (488 aa)). A disulfide bond links cysteine 105 and cysteine 116. Residue asparagine 127 is glycosylated (N-linked (GlcNAc...) asparagine). 4 disulfide bridges follow: cysteine 134–cysteine 143, cysteine 274–cysteine 386, cysteine 298–cysteine 346, and cysteine 522–cysteine 540. The Ig-like C2-type domain occupies 552-670 (PTSKRRARRQ…IHTIVKLNLN (119 aa)). Residue asparagine 595 is glycosylated (N-linked (GlcNAc...) asparagine). Residues cysteine 653 and cysteine 719 are joined by a disulfide bond. A compositionally biased stretch (basic residues) spans 728-754 (RRQRNKGGAKWKHVQEMKKKRNRRHHE). The interval 728–761 (RRQRNKGGAKWKHVQEMKKKRNRRHHEPARPPST) is disordered.

It belongs to the semaphorin family. Developing spinal cord and developing visual system. Collapsin-1, -2, -3, and -5 bind to overlapping but distinct axon tracts.

It is found in the secreted. Its function is as follows. Induces the collapse and paralysis of neuronal growth cones. Could potentially act as repulsive cues toward specific neuronal populations. Binds to neuropilin. In Gallus gallus (Chicken), this protein is Semaphorin-3D (SEMA3D).